The following is a 560-amino-acid chain: Proteasome-associated ATPase (560 aa).

A compositionally biased stretch (basic and acidic residues) spans 1–19; that stretch reads MSQQHDDRRPPDTADRDLA. The interval 1-21 is disordered; it reads MSQQHDDRRPPDTADRDLARQ. Positions 16–55 form a coiled coil; it reads RDLARQATSLAEKNERLTAALTAARAQLVEMKAQLEEVSK. 237–242 contributes to the ATP binding site; it reads GCGKTL. Residues 559-560 are docks into pockets in the proteasome alpha-ring; that stretch reads YL.

It belongs to the AAA ATPase family. As to quaternary structure, homohexamer. Assembles into a hexameric ring structure that caps the 20S proteasome core. Strongly interacts with the prokaryotic ubiquitin-like protein Pup through a hydrophobic interface; the interacting region of ARC lies in its N-terminal coiled-coil domain. There is one Pup binding site per ARC hexamer ring. Upon ATP-binding, the C-terminus of ARC interacts with the alpha-rings of the proteasome core, possibly by binding to the intersubunit pockets.

Its pathway is protein degradation; proteasomal Pup-dependent pathway. In terms of biological role, ATPase which is responsible for recognizing, binding, unfolding and translocation of pupylated proteins into the bacterial 20S proteasome core particle. May be essential for opening the gate of the 20S proteasome via an interaction with its C-terminus, thereby allowing substrate entry and access to the site of proteolysis. Thus, the C-termini of the proteasomal ATPase may function like a 'key in a lock' to induce gate opening and therefore regulate proteolysis. This Beutenbergia cavernae (strain ATCC BAA-8 / DSM 12333 / CCUG 43141 / JCM 11478 / NBRC 16432 / NCIMB 13614 / HKI 0122) protein is Proteasome-associated ATPase.